The primary structure comprises 301 residues: Ribosomal protein L11 methyltransferase (301 aa).

Residues Thr146, Gly167, Asp189, and Asn237 each coordinate S-adenosyl-L-methionine.

It belongs to the methyltransferase superfamily. PrmA family.

The protein resides in the cytoplasm. It catalyses the reaction L-lysyl-[protein] + 3 S-adenosyl-L-methionine = N(6),N(6),N(6)-trimethyl-L-lysyl-[protein] + 3 S-adenosyl-L-homocysteine + 3 H(+). Its function is as follows. Methylates ribosomal protein L11. The polypeptide is Ribosomal protein L11 methyltransferase (Prochlorococcus marinus (strain MIT 9303)).